The primary structure comprises 239 residues: Apoptosis regulator Bcl-2 (239 aa).

Residues 10-30 carry the BH4 motif; that stretch reads DNREIVMKYIHYKLSQRGYEW. The segment at 39 to 85 is disordered; that stretch reads PPGAAPAPGIFSSQPGHTPHPAASRDPVARTSPLQTPAAPGAAAGPA. Residue Thr-69 is modified to Phosphothreonine; by MAPK8. A Phosphoserine; by MAPK8 and PKC modification is found at Ser-70. Residues 75-85 show a composition bias toward low complexity; the sequence is PAAPGAAAGPA. The residue at position 87 (Ser-87) is a Phosphoserine; by MAPK8. The required for interaction with SEPTIN4 isoform ARTS. Required XIAP-mediated ubiquitination and apoptosis stretch occupies residues 92 to 107; that stretch reads VVHLTLRQAGDDFSRR. The BH3 motif lies at 93 to 107; sequence VHLTLRQAGDDFSRR. A BH1 motif is present at residues 136–155; that stretch reads ELFRDGVNWGRIVAFFEFGG. Residues 187-202 carry the BH2 motif; the sequence is TWIQDNGGWDAFVELY. The helical transmembrane segment at 212–233 threads the bilayer; it reads FSWLSLKTLLSLALVGACITLG.

This sequence belongs to the Bcl-2 family. As to quaternary structure, forms homodimers, and heterodimers with BAX, BAD, BAK and Bcl-X(L). Heterodimerization with BAX requires intact BH1 and BH2 motifs, and is necessary for anti-apoptotic activity. Part of a complex composed of SEPTIN4 isoform ARTS, XIAP and BCL2, within the complex interacts (via BH3 domain) with SEPTIN4 isoform ARTS and XIAP, SEPTIN4 isoform ARTS acts as a scaffold protein and stabilizes the complex. Component of the complex, at least composed of LRPPRC, BECN1 and BCL2; the interactions prevent BECN1 from forming an autophagy-inducing complex with PIK3C3. Interacts with EI24. Also interacts with APAF1, BBC3, BCL2L1, BNIPL, MRPL41 and TP53BP2. Binding to FKBP8 seems to target BCL2 to the mitochondria and probably interferes with the binding of BCL2 to its targets. Interacts with BAG1 in an ATP-dependent manner. Interacts with RAF1 (the 'Ser-338' and 'Ser-339' phosphorylated form). Interacts (via the BH4 domain) with EGLN3; the interaction prevents the formation of the BAX-BCL2 complex and inhibits the anti-apoptotic activity of BCL2. Interacts with G0S2; this interaction also prevents the formation of the anti-apoptotic BAX-BCL2 complex. Interacts with RTL10/BOP. Interacts with the SCF(FBXO10) complex. Interacts (via the loop between motifs BH4 and BH3) with NLRP1 (via LRR repeats), but not with NLRP2, NLRP3, NLRP4, PYCARD, nor MEFV. Interacts with GIMAP3/IAN4, GIMAP4/IAN1 and GIMAP5/IAN5. Interacts with BCAP31. Interacts with IRF3; the interaction is inhibited by Sendai virus infection. Interacts with BECN1; thereby inhibiting autophagy in non-starvation conditions. Interacts with AMBRA1; thereby inhibiting autophagy. (Microbial infection) Interacts with Toxoplasma gondii ROP17; the interaction probably promotes BCL2 phosphorylation and degradation. In terms of processing, phosphorylation/dephosphorylation on Ser-70 regulates anti-apoptotic activity. Growth factor-stimulated phosphorylation on Ser-70 by PKC is required for the anti-apoptosis activity and occurs during the G2/M phase of the cell cycle. In the absence of growth factors, BCL2 appears to be phosphorylated by other protein kinases such as ERKs and stress-activated kinases. Phosphorylated by MAPK8/JNK1 at Thr-69, Ser-70 and Ser-87, which stimulates starvation-induced autophagy. Dephosphorylated by protein phosphatase 2A (PP2A). Proteolytically cleaved by caspases during apoptosis. The cleaved protein, lacking the BH4 motif, has pro-apoptotic activity, causes the release of cytochrome c into the cytosol promoting further caspase activity. Post-translationally, monoubiquitinated by PRKN, leading to an increase in its stability. Ubiquitinated by SCF(FBXO10), leading to its degradation by the proteasome. Ubiquitinated by XIAP, leading to its degradation by the proteasome. In terms of tissue distribution, expressed in a variety of tissues.

The protein localises to the mitochondrion outer membrane. The protein resides in the nucleus membrane. It localises to the endoplasmic reticulum membrane. It is found in the cytoplasm. In terms of biological role, suppresses apoptosis in a variety of cell systems including factor-dependent lymphohematopoietic and neural cells. Regulates cell death by controlling the mitochondrial membrane permeability. Appears to function in a feedback loop system with caspases. Inhibits caspase activity either by preventing the release of cytochrome c from the mitochondria and/or by binding to the apoptosis-activating factor (APAF-1). Also acts as an inhibitor of autophagy: interacts with BECN1 and AMBRA1 during non-starvation conditions and inhibits their autophagy function. May attenuate inflammation by impairing NLRP1-inflammasome activation, hence CASP1 activation and IL1B release. The chain is Apoptosis regulator Bcl-2 (BCL2) from Homo sapiens (Human).